The following is a 111-amino-acid chain: Urease subunit beta (111 aa).

Belongs to the urease beta subunit family. Heterotrimer of UreA (gamma), UreB (beta) and UreC (alpha) subunits. Three heterotrimers associate to form the active enzyme.

The protein resides in the cytoplasm. The catalysed reaction is urea + 2 H2O + H(+) = hydrogencarbonate + 2 NH4(+). It functions in the pathway nitrogen metabolism; urea degradation; CO(2) and NH(3) from urea (urease route): step 1/1. This Geobacillus kaustophilus (strain HTA426) protein is Urease subunit beta.